We begin with the raw amino-acid sequence, 473 residues long: PTS system trehalose-specific EIIBC component (473 aa).

The 89-residue stretch at 1–89 (MMSKINQTDI…IASTGQAQVD (89 aa)) folds into the PTS EIIB type-1 domain. Residues 1 to 110 (MMSKINQTDI…MKWHEQLISH (110 aa)) are Cytoplasmic-facing. Cysteine 29 serves as the catalytic Phosphocysteine intermediate; for EIIB activity. At cysteine 29 the chain carries Phosphocysteine; by EIIA. Residues 109–473 (SHFAVIFFPL…KYRLGTLDIV (365 aa)) enclose the PTS EIIC type-1 domain. The chain crosses the membrane as a helical span at residues 111 to 131 (FAVIFFPLLPALISGGLILGF). Over 132 to 158 (RNVIGDLPMSNGQTLAQMYPSLQTIYD) the chain is Periplasmic. A helical transmembrane segment spans residues 159-179 (FLWLIGEAIFFYLPVGICWSA). The Cytoplasmic portion of the chain corresponds to 180-187 (VKKMGGTP). Residues 188-208 (ILGIVLGVTLVSPQLMNAYLL) form a helical membrane-spanning segment. Residues 209-225 (GQQLPEVWDFGMFSIAK) lie on the Periplasmic side of the membrane. Residues 226-246 (VGYQAQVIPALLAGLALGVIE) traverse the membrane as a helical segment. Topologically, residues 247–258 (TRLKRIVPDYLY) are cytoplasmic. A helical transmembrane segment spans residues 259-279 (LVVVPVCSLILAVFLAHALIG). The Periplasmic portion of the chain corresponds to 280–300 (PFGRMIGDGVAFAVRHLMTGS). Residues 301–321 (FAPIGAALFGFLYAPLVITGV) form a helical membrane-spanning segment. Topologically, residues 322 to 340 (HQTTLAIDLQMIQSMGGTP) are cytoplasmic. A helical transmembrane segment spans residues 341-361 (VWPLIALSNIAQGSAVIGIII). The Periplasmic portion of the chain corresponds to 362–370 (SSRKHNERE). The helical transmembrane segment at 371–391 (ISVPAAISAWLGVTEPAMYGI) threads the bilayer. Over 392–398 (NLKYRFP) the chain is Cytoplasmic. Residues 399–419 (MLCAMIGSGLAGLLCGLNGVM) form a helical membrane-spanning segment. Topologically, residues 420-440 (ANGIGVGGLPGILSIQPSYWQ) are periplasmic. A helical membrane pass occupies residues 441–461 (VFALAMAIAIIIPIVLTSFIY). At 462 to 473 (QRKYRLGTLDIV) the chain is on the cytoplasmic side.

The protein resides in the cell inner membrane. The enzyme catalyses alpha,alpha-trehalose(out) + N(pros)-phospho-L-histidyl-[protein] = alpha,alpha-trehalose 6-phosphate(in) + L-histidyl-[protein]. The phosphoenolpyruvate-dependent sugar phosphotransferase system (sugar PTS), a major carbohydrate active transport system, catalyzes the phosphorylation of incoming sugar substrates concomitantly with their translocation across the cell membrane. This system is involved in trehalose transport at low osmolarity. The polypeptide is PTS system trehalose-specific EIIBC component (treB) (Escherichia coli (strain K12)).